Reading from the N-terminus, the 292-residue chain is Protein-L-isoaspartate O-methyltransferase (292 aa).

The interval 1–76 (MTEKKRFPLS…AAAPSSNERA (76 aa)) is disordered. Over residues 28-48 (NRSSTSGKVATPQTATQNASQ) the composition is skewed to polar residues. The active site involves Ser-138.

Belongs to the methyltransferase superfamily. L-isoaspartyl/D-aspartyl protein methyltransferase family.

It localises to the cytoplasm. The catalysed reaction is [protein]-L-isoaspartate + S-adenosyl-L-methionine = [protein]-L-isoaspartate alpha-methyl ester + S-adenosyl-L-homocysteine. In terms of biological role, catalyzes the methyl esterification of L-isoaspartyl residues in peptides and proteins that result from spontaneous decomposition of normal L-aspartyl and L-asparaginyl residues. It plays a role in the repair and/or degradation of damaged proteins. This chain is Protein-L-isoaspartate O-methyltransferase, found in Janthinobacterium sp. (strain Marseille) (Minibacterium massiliensis).